A 171-amino-acid chain; its full sequence is Peptide deformylase 1 (171 aa).

Cys99 and His141 together coordinate Fe cation. Glu142 is an active-site residue. His145 lines the Fe cation pocket.

Belongs to the polypeptide deformylase family. Fe(2+) serves as cofactor.

The catalysed reaction is N-terminal N-formyl-L-methionyl-[peptide] + H2O = N-terminal L-methionyl-[peptide] + formate. Its function is as follows. Removes the formyl group from the N-terminal Met of newly synthesized proteins. Requires at least a dipeptide for an efficient rate of reaction. N-terminal L-methionine is a prerequisite for activity but the enzyme has broad specificity at other positions. The chain is Peptide deformylase 1 from Xanthomonas campestris pv. campestris (strain ATCC 33913 / DSM 3586 / NCPPB 528 / LMG 568 / P 25).